A 173-amino-acid chain; its full sequence is ATP synthase subunit b (173 aa).

The helical transmembrane segment at 20-40 (IIATLAIFLVLMFLLKKVAWG) threads the bilayer.

Belongs to the ATPase B chain family. In terms of assembly, F-type ATPases have 2 components, F(1) - the catalytic core - and F(0) - the membrane proton channel. F(1) has five subunits: alpha(3), beta(3), gamma(1), delta(1), epsilon(1). F(0) has three main subunits: a(1), b(2) and c(10-14). The alpha and beta chains form an alternating ring which encloses part of the gamma chain. F(1) is attached to F(0) by a central stalk formed by the gamma and epsilon chains, while a peripheral stalk is formed by the delta and b chains.

It is found in the cell membrane. Functionally, f(1)F(0) ATP synthase produces ATP from ADP in the presence of a proton or sodium gradient. F-type ATPases consist of two structural domains, F(1) containing the extramembraneous catalytic core and F(0) containing the membrane proton channel, linked together by a central stalk and a peripheral stalk. During catalysis, ATP synthesis in the catalytic domain of F(1) is coupled via a rotary mechanism of the central stalk subunits to proton translocation. In terms of biological role, component of the F(0) channel, it forms part of the peripheral stalk, linking F(1) to F(0). The protein is ATP synthase subunit b of Lysinibacillus sphaericus (strain C3-41).